The following is a 100-amino-acid chain: ATP-dependent Clp protease adapter protein ClpS (100 aa).

The protein belongs to the ClpS family. In terms of assembly, binds to the N-terminal domain of the chaperone ClpA.

In terms of biological role, involved in the modulation of the specificity of the ClpAP-mediated ATP-dependent protein degradation. The protein is ATP-dependent Clp protease adapter protein ClpS of Nitratidesulfovibrio vulgaris (strain DSM 19637 / Miyazaki F) (Desulfovibrio vulgaris).